The primary structure comprises 267 residues: UPF0328 protein ECU06_0070 (267 aa).

The protein belongs to the UPF0328 family.

The sequence is that of UPF0328 protein ECU06_0070 from Encephalitozoon cuniculi (strain GB-M1) (Microsporidian parasite).